A 370-amino-acid chain; its full sequence is Spermidine/putrescine import ATP-binding protein PotA (370 aa).

The ABC transporter domain maps to Ile-6 to Ile-236. Gly-38–Thr-45 serves as a coordination point for ATP.

It belongs to the ABC transporter superfamily. Spermidine/putrescine importer (TC 3.A.1.11.1) family. As to quaternary structure, the complex is composed of two ATP-binding proteins (PotA), two transmembrane proteins (PotB and PotC) and a solute-binding protein (PotD).

The protein localises to the cell membrane. The enzyme catalyses ATP + H2O + polyamine-[polyamine-binding protein]Side 1 = ADP + phosphate + polyamineSide 2 + [polyamine-binding protein]Side 1.. Part of the ABC transporter complex PotABCD involved in spermidine/putrescine import. Responsible for energy coupling to the transport system. This Levilactobacillus brevis (strain ATCC 367 / BCRC 12310 / CIP 105137 / JCM 1170 / LMG 11437 / NCIMB 947 / NCTC 947) (Lactobacillus brevis) protein is Spermidine/putrescine import ATP-binding protein PotA.